We begin with the raw amino-acid sequence, 146 residues long: uncharacterized protein (146 aa).

The N-acetyltransferase domain maps to leucine 7 to proline 146.

This is an uncharacterized protein from Staphylococcus epidermidis (strain ATCC 35984 / DSM 28319 / BCRC 17069 / CCUG 31568 / BM 3577 / RP62A).